Here is a 569-residue protein sequence, read N- to C-terminus: 3-oxosteroid 1-dehydrogenase (569 aa).

10-39 (DVVVVGSGAAGMVAALTAAHQGLSTVVVEK) contributes to the FAD binding site. A disordered region spans residues 127-148 (PGGKPTGRSVEPKPFDANKLGP).

This sequence belongs to the FAD-dependent oxidoreductase 2 family. 3-oxosteroid dehydrogenase subfamily. Requires FAD as cofactor.

The enzyme catalyses a 3-oxosteroid + A = a 3-oxo-Delta(1)-steroid + AH2. The catalysed reaction is a 3-oxo-Delta(4)-steroid + A = a 3-oxo-Delta(1,4)-steroid + AH2. In terms of biological role, catalyzes the elimination of the C-1 and C-2 hydrogen atoms of the A-ring from the polycyclic ring structure of 3-ketosteroids. Is also involved in the formation of 1,4-androstadiene-3,17-dione (ADD) from 4-androstene-3,17-dione (AD) to. This chain is 3-oxosteroid 1-dehydrogenase (ksdD), found in Mycolicibacterium smegmatis (strain ATCC 700084 / mc(2)155) (Mycobacterium smegmatis).